The primary structure comprises 59 residues: Large ribosomal subunit protein uL30 (59 aa).

This sequence belongs to the universal ribosomal protein uL30 family. As to quaternary structure, part of the 50S ribosomal subunit.

This is Large ribosomal subunit protein uL30 from Macrococcus caseolyticus (strain JCSC5402) (Macrococcoides caseolyticum).